We begin with the raw amino-acid sequence, 236 residues long: uncharacterized protein (236 aa).

A disordered region spans residues 217–236 (GESPDNVVRGEGGFGSTGGH). Positions 226 to 236 (GEGGFGSTGGH) are enriched in gly residues.

This is an uncharacterized protein from Ostreid herpesvirus 1 (isolate France) (OsHV-1).